Reading from the N-terminus, the 89-residue chain is Translation initiation factor IF-1, chloroplastic (89 aa).

The S1-like domain maps to 1-72; that stretch reads MKKQDLIDME…TKGRIIYRLR (72 aa).

The protein belongs to the IF-1 family. Component of the 30S ribosomal translation pre-initiation complex which assembles on the 30S ribosome in the order IF-2 and IF-3, IF-1 and N-formylmethionyl-tRNA(fMet); mRNA recruitment can occur at any time during PIC assembly.

The protein localises to the plastid. The protein resides in the chloroplast. Functionally, one of the essential components for the initiation of protein synthesis. Stabilizes the binding of IF-2 and IF-3 on the 30S subunit to which N-formylmethionyl-tRNA(fMet) subsequently binds. Helps modulate mRNA selection, yielding the 30S pre-initiation complex (PIC). Upon addition of the 50S ribosomal subunit IF-1, IF-2 and IF-3 are released leaving the mature 70S translation initiation complex. This Angiopteris evecta (Mule's foot fern) protein is Translation initiation factor IF-1, chloroplastic.